Consider the following 437-residue polypeptide: Eukaryotic peptide chain release factor subunit 1 (437 aa).

Gln-182 is modified (N5-methylglutamine). Residue Lys-331 forms a Glycyl lysine isopeptide (Lys-Gly) (interchain with G-Cter in ubiquitin) linkage. Residue Ser-421 is modified to Phosphoserine.

Belongs to the eukaryotic release factor 1 family. Component of the eRF1-eRF3-GTP ternary complex, composed of SUP45/eRF1, SUP35/eRF3 and GTP. Interacts with TPA1. Post-translationally, N5-methylated on Gln-182 by MTQ2.

It localises to the cytoplasm. Component of the eRF1-eRF3-GTP ternary complex, a ternary complex that mediates translation termination in response to the termination codons. The eRF1-eRF3-GTP complex binds to a stop codon in the ribosomal A-site. SUP45/eRF1 is responsible for stop codon recognition and inducing hydrolysis of peptidyl-tRNA. Following GTP hydrolysis by SUP35/eRF3, SUP35/eRF3 dissociates, permitting SUP45/eRF1 to accommodate fully in the A-site and mediate hydrolysis of peptidyl-tRNA. This Saccharomyces cerevisiae (strain ATCC 204508 / S288c) (Baker's yeast) protein is Eukaryotic peptide chain release factor subunit 1 (SUP45).